The primary structure comprises 268 residues: Putative F-box protein At3g23420 (268 aa).

In terms of domain architecture, F-box spans Pro-5–His-51.

The sequence is that of Putative F-box protein At3g23420 from Arabidopsis thaliana (Mouse-ear cress).